The primary structure comprises 439 residues: Na(+)/H(+) antiporter NhaA 1 (439 aa).

11 consecutive transmembrane segments (helical) span residues 14–34 (ITGG…ANLA), 60–80 (ISLH…FIGL), 98–118 (ALPL…YYFF), 127–147 (GWGI…AMVG), 156–176 (IFLS…IAIF), 179–199 (EQIF…LAVA), 213–233 (IGLI…TIAG), 303–323 (HPIS…GVIV), 335–355 (IVLG…FLFA), 375–395 (IIGT…ISDL), and 408–428 (VAVL…LISA).

This sequence belongs to the NhaA Na(+)/H(+) (TC 2.A.33) antiporter family.

The protein resides in the cell inner membrane. It catalyses the reaction Na(+)(in) + 2 H(+)(out) = Na(+)(out) + 2 H(+)(in). Its function is as follows. Na(+)/H(+) antiporter that extrudes sodium in exchange for external protons. The polypeptide is Na(+)/H(+) antiporter NhaA 1 (Psychromonas ingrahamii (strain DSM 17664 / CCUG 51855 / 37)).